We begin with the raw amino-acid sequence, 359 residues long: Alpha-ketoglutarate-dependent dioxygenase cnsM (359 aa).

H120 contacts substrate. H158 and D160 together coordinate Fe cation. Residue T186 participates in 2-oxoglutarate binding. Residue H311 participates in Fe cation binding. Positions 323 and 327 each coordinate 2-oxoglutarate. R327 lines the substrate pocket.

This sequence belongs to the TfdA dioxygenase family. It depends on Fe(2+) as a cofactor.

Its pathway is alkaloid biosynthesis. Alpha-ketoglutarate-dependent dioxygenase; part of the gene cluster that mediates the biosynthesis of communesins, a prominent class of indole alkaloids with great potential as pharmaceuticals. Communesins are biosynthesized by the coupling of tryptamine and aurantioclavine, two building blocks derived from L-tryptophan. The L-tryptophan decarboxylase cnsB converts L-tryptophan to tryptamine, whereas the tryptophan dimethylallyltransferase cnsF converts L-tryptophan to 4-dimethylallyl tryptophan which is further transformed to aurantioclavine by the aurantioclavine synthase cnsA, probably aided by the catalase cnsD. The cytochrome P450 monooxygenase cnsC catalyzes the heterodimeric coupling between the two different indole moieties, tryptamine and aurantioclavine, to construct vicinal quaternary stereocenters and yield the heptacyclic communesin scaffold. The O-methyltransferase cnsE then methylates the communesin scaffold to produce communesin K, the simplest characterized communesin that contains the heptacyclic core. The dioxygenase cnsJ converts communesin K into communesin I. Acylation to introduce the hexadienyl group at position N16 of communesin I by the acyltransferase cnsK leads to the production of communesin B. The hexadienyl group is produced by the highly reducing polyketide synthase cnsI, before being hydrolytically removed from cnsI by the serine hydrolase cnsH, converted into hexadienyl-CoA by the CoA ligase cnsG, and then transferred to communesin I by cnsK. Surprisingly, cnsK may also be a promiscuous acyltransferase that can tolerate a range of acyl groups, including acetyl-, propionyl-, and butyryl-CoA, which lead to communesins A, G and H respectively. The roles of the alpha-ketoglutarate-dependent dioxygenases cnsM and cnsP have still to be determined. This chain is Alpha-ketoglutarate-dependent dioxygenase cnsM, found in Penicillium expansum (Blue mold rot fungus).